A 323-amino-acid chain; its full sequence is Acetyl-coenzyme A carboxylase carboxyl transferase subunit alpha (323 aa).

The 255-residue stretch at 39–293 folds into the CoA carboxyltransferase C-terminal domain; the sequence is RLSKKSQQLT…RRALADSLRQ (255 aa).

It belongs to the AccA family. As to quaternary structure, acetyl-CoA carboxylase is a heterohexamer composed of biotin carboxyl carrier protein (AccB), biotin carboxylase (AccC) and two subunits each of ACCase subunit alpha (AccA) and ACCase subunit beta (AccD).

It is found in the cytoplasm. It carries out the reaction N(6)-carboxybiotinyl-L-lysyl-[protein] + acetyl-CoA = N(6)-biotinyl-L-lysyl-[protein] + malonyl-CoA. The protein operates within lipid metabolism; malonyl-CoA biosynthesis; malonyl-CoA from acetyl-CoA: step 1/1. Component of the acetyl coenzyme A carboxylase (ACC) complex. First, biotin carboxylase catalyzes the carboxylation of biotin on its carrier protein (BCCP) and then the CO(2) group is transferred by the carboxyltransferase to acetyl-CoA to form malonyl-CoA. This chain is Acetyl-coenzyme A carboxylase carboxyl transferase subunit alpha, found in Burkholderia orbicola (strain AU 1054).